A 137-amino-acid polypeptide reads, in one-letter code: Ribosome-binding factor A (137 aa).

This sequence belongs to the RbfA family. As to quaternary structure, monomer. Binds 30S ribosomal subunits, but not 50S ribosomal subunits or 70S ribosomes.

It is found in the cytoplasm. In terms of biological role, one of several proteins that assist in the late maturation steps of the functional core of the 30S ribosomal subunit. Associates with free 30S ribosomal subunits (but not with 30S subunits that are part of 70S ribosomes or polysomes). Required for efficient processing of 16S rRNA. May interact with the 5'-terminal helix region of 16S rRNA. This chain is Ribosome-binding factor A, found in Shewanella amazonensis (strain ATCC BAA-1098 / SB2B).